Consider the following 142-residue polypeptide: Hemoglobin subunit alpha-A (142 aa).

Positions 2-142 (VLSANDKSNV…VGTVLTAKYR (141 aa)) constitute a Globin domain. His59 is a binding site for O2. A heme b-binding site is contributed by His88.

Belongs to the globin family. Heterotetramer of two alpha chains and two beta chains. Red blood cells.

In terms of biological role, involved in oxygen transport from the lung to the various peripheral tissues. The sequence is that of Hemoglobin subunit alpha-A (HBAA) from Columba livia (Rock dove).